The primary structure comprises 146 residues: Hemoglobin subunit beta (146 aa).

Val-1 bears the N-acetylvaline mark. One can recognise a Globin domain in the interval 2–146 (HLTGEEKAAV…VANALAHKYH (145 aa)). Residue Thr-12 is modified to Phosphothreonine. Phosphoserine is present on Ser-44. An N6-acetyllysine modification is found at Lys-59. His-63 contributes to the heme b binding site. N6-acetyllysine is present on Lys-82. His-92 provides a ligand contact to heme b. Cys-93 is modified (S-nitrosocysteine). The residue at position 144 (Lys-144) is an N6-acetyllysine.

It belongs to the globin family. As to quaternary structure, heterotetramer of two alpha chains and two beta chains. In terms of tissue distribution, red blood cells.

Its function is as follows. Involved in oxygen transport from the lung to the various peripheral tissues. This Mustela putorius furo (European domestic ferret) protein is Hemoglobin subunit beta (HBB).